The sequence spans 317 residues: MRSYLDFEKPVAELEAKLEELRALGARDGAVAIAEDVARLESKAAAALAELYAALTPWQKTQVARHPQRPHFVDYCDALISEFTPLAGDRSFGEDEAIVGGFGRFRGRPVCVIGQEKGASTEARIRHNFGMARPEGYRKAVRLMDLAGRFGLPVLTFVDTAGAYPGIDAEERGQAEAIARSTEACLALGTPNLALVIGEGGSGGAIALATANRVLMLEHAIYSVISPEGAASILWRDAGRAQDAATAMKITAQDLLRLGVIDAIVPEPTGGAHRDPAAAFRAAEEAIAEGLAGLDGLDAEALRDQRAQKFLEIGRKL.

The region spanning 39–293 (RLESKAAAAL…EEAIAEGLAG (255 aa)) is the CoA carboxyltransferase C-terminal domain.

This sequence belongs to the AccA family. As to quaternary structure, acetyl-CoA carboxylase is a heterohexamer composed of biotin carboxyl carrier protein (AccB), biotin carboxylase (AccC) and two subunits each of ACCase subunit alpha (AccA) and ACCase subunit beta (AccD).

It localises to the cytoplasm. It carries out the reaction N(6)-carboxybiotinyl-L-lysyl-[protein] + acetyl-CoA = N(6)-biotinyl-L-lysyl-[protein] + malonyl-CoA. It functions in the pathway lipid metabolism; malonyl-CoA biosynthesis; malonyl-CoA from acetyl-CoA: step 1/1. Functionally, component of the acetyl coenzyme A carboxylase (ACC) complex. First, biotin carboxylase catalyzes the carboxylation of biotin on its carrier protein (BCCP) and then the CO(2) group is transferred by the carboxyltransferase to acetyl-CoA to form malonyl-CoA. The sequence is that of Acetyl-coenzyme A carboxylase carboxyl transferase subunit alpha from Methylobacterium sp. (strain 4-46).